The primary structure comprises 208 residues: MPNLDKLIIGFDHALRTLLTPAQTLRPVPGTQLPEAELNDLEKSESAALMRVNHVGEICAQALYQGQALTARNAEVQQTLAQAAREETEHLAWTERRINELSGRKSLLNPLWYGGSFAIGAFAGLLGDKWNLGFLAETERQVSAHLGGHLSRLPHADEKSRAIVTQMQIDEAGHATTAVAYGGAELPMPVKLVMRMASSVMTRTAYWV.

Positions 57, 87, 90, 139, 171, and 174 each coordinate Fe cation.

The protein belongs to the COQ7 family. Fe cation is required as a cofactor.

It localises to the cell membrane. The enzyme catalyses a 5-methoxy-2-methyl-3-(all-trans-polyprenyl)benzene-1,4-diol + AH2 + O2 = a 3-demethylubiquinol + A + H2O. It participates in cofactor biosynthesis; ubiquinone biosynthesis. In terms of biological role, catalyzes the hydroxylation of 2-nonaprenyl-3-methyl-6-methoxy-1,4-benzoquinol during ubiquinone biosynthesis. In Nitrosospira multiformis (strain ATCC 25196 / NCIMB 11849 / C 71), this protein is 3-demethoxyubiquinol 3-hydroxylase.